The chain runs to 525 residues: Cobyric acid synthase (525 aa).

A GATase cobBQ-type domain is found at 251–452 (ELEIAVLYLP…FHGIFDNDLL (202 aa)). Cysteine 332 (nucleophile) is an active-site residue. Histidine 444 is an active-site residue.

Belongs to the CobB/CobQ family. CobQ subfamily.

Its pathway is cofactor biosynthesis; adenosylcobalamin biosynthesis. In terms of biological role, catalyzes amidations at positions B, D, E, and G on adenosylcobyrinic A,C-diamide. NH(2) groups are provided by glutamine, and one molecule of ATP is hydrogenolyzed for each amidation. This Pelotomaculum thermopropionicum (strain DSM 13744 / JCM 10971 / SI) protein is Cobyric acid synthase.